The following is a 299-amino-acid chain: Recombination-associated protein RdgC (299 aa).

The protein belongs to the RdgC family.

It localises to the cytoplasm. The protein localises to the nucleoid. Functionally, may be involved in recombination. This Neisseria meningitidis serogroup A / serotype 4A (strain DSM 15465 / Z2491) protein is Recombination-associated protein RdgC.